The sequence spans 353 residues: MTAILERRESESLWGRFCNWITSTENRLYIGWFGVLMIPTLLTATSVFIIAFIAAPPVDIDGIREPVSGSLLYGNNIISGAIIPTSAAIGLHFYPIWEAASVDEWLYNGGPYELIVLHFLLGVACYMGREWELSFRLGMRPWIAVAYSAPVAAATAVFLIYPIGQGSFSDGMPLGISGTFNFMIVFQAEHNILMHPFHMLGVAGVFGGSLFSAMHGSLVTSSLIRETTENESANEGYRFGQEEETYNIVAAHGYFGRLIFQYASFNNSRSLHFFLAAWPVVGIWFTALGISTMAFNLNGFNFNQSVVDSQGRVINTWADIINRANLGMEVMHERNAHNFPLDLAAVEVPSING.

T2 bears the N-acetylthreonine mark. Phosphothreonine is present on T2. 3 consecutive transmembrane segments (helical) span residues Y29–S46, H118–L133, and W142–A156. H118 is a binding site for chlorophyll a. A pheophytin a-binding site is contributed by Y126. [CaMn4O5] cluster-binding residues include D170 and E189. A helical transmembrane segment spans residues F197 to L218. H198 is a chlorophyll a binding site. A quinone contacts are provided by residues H215 and S264 to F265. H215 serves as a coordination point for Fe cation. H272 serves as a coordination point for Fe cation. Residues F274 to L288 form a helical membrane-spanning segment. Residues H332, E333, D342, and A344 each coordinate [CaMn4O5] cluster. Positions A345–G353 are excised as a propeptide.

It belongs to the reaction center PufL/M/PsbA/D family. PSII is composed of 1 copy each of membrane proteins PsbA, PsbB, PsbC, PsbD, PsbE, PsbF, PsbH, PsbI, PsbJ, PsbK, PsbL, PsbM, PsbT, PsbX, PsbY, PsbZ, Psb30/Ycf12, at least 3 peripheral proteins of the oxygen-evolving complex and a large number of cofactors. It forms dimeric complexes. The D1/D2 heterodimer binds P680, chlorophylls that are the primary electron donor of PSII, and subsequent electron acceptors. It shares a non-heme iron and each subunit binds pheophytin, quinone, additional chlorophylls, carotenoids and lipids. D1 provides most of the ligands for the Mn4-Ca-O5 cluster of the oxygen-evolving complex (OEC). There is also a Cl(-1) ion associated with D1 and D2, which is required for oxygen evolution. The PSII complex binds additional chlorophylls, carotenoids and specific lipids. is required as a cofactor. In terms of processing, tyr-161 forms a radical intermediate that is referred to as redox-active TyrZ, YZ or Y-Z. C-terminally processed by CTPA; processing is essential to allow assembly of the oxygen-evolving complex and thus photosynthetic growth.

Its subcellular location is the plastid. It is found in the chloroplast thylakoid membrane. It carries out the reaction 2 a plastoquinone + 4 hnu + 2 H2O = 2 a plastoquinol + O2. Photosystem II (PSII) is a light-driven water:plastoquinone oxidoreductase that uses light energy to abstract electrons from H(2)O, generating O(2) and a proton gradient subsequently used for ATP formation. It consists of a core antenna complex that captures photons, and an electron transfer chain that converts photonic excitation into a charge separation. The D1/D2 (PsbA/PsbD) reaction center heterodimer binds P680, the primary electron donor of PSII as well as several subsequent electron acceptors. This is Photosystem II protein D1 from Cucumis sativus (Cucumber).